The sequence spans 227 residues: MICOS complex subunit MIC19 (227 aa).

Gly-2 carries N-myristoyl glycine lipidation. Position 29 is a phosphoserine (Ser-29). Disordered regions lie at residues 34–61 and 73–92; these read DRMKESSPSGSKSQRYSGAYGASVSDEE and EQAKKESEDQKRLKQAKELD. Positions 39–49 are enriched in polar residues; sequence SSPSGSKSQRY. Tyr-49 is modified (phosphotyrosine). A phosphoserine mark is found at Ser-50, Ser-56, and Ser-58. Lys-142 is subject to N6-acetyllysine. A CHCH domain is found at 180–222; sequence HPVCADLQAKILQCYRENTHQTLKCSALATQYMHCVNHAKQSM. 2 consecutive short sequence motifs (cx9C motif) follow at residues 183-193 and 204-214; these read CADLQAKILQC and CSALATQYMHC. Cystine bridges form between Cys-183–Cys-214 and Cys-193–Cys-204.

The protein belongs to the MICOS complex subunit Mic19 family. Metazoan Mic19 subfamily. As to quaternary structure, component of the mitochondrial contact site and cristae organizing system (MICOS) complex, composed of at least MICOS10/MIC10, CHCHD3/MIC19, CHCHD6/MIC25, APOOL/MIC27, IMMT/MIC60, APOO/MIC23/MIC26 and MICOS13/MIC13. This complex was also known under the names MINOS or MitOS complex. The MICOS complex associates with mitochondrial outer membrane proteins SAMM50, MTX1 and MTX2 (together described as components of the mitochondrial outer membrane sorting assembly machinery (SAM) complex) and DNAJC11, mitochondrial inner membrane protein TMEM11 and with HSPA9. The MICOS and SAM complexes together with DNAJC11 are part of a large protein complex spanning both membranes termed the mitochondrial intermembrane space bridging (MIB) complex. Interacts with HSPA1A/HSPA1B and OPA1, preferentially with the soluble OPA1 form. Interacts with IMMT/MIC60. In terms of assembly, (Microbial infection) Interacts with human cytomegalovirus protein UL13; this interaction alters cristae architecture. As to expression, detected at low levels in brain, placenta, lung, liver, kidney and pancreas with increased levels in heart and skeletal muscle. Higher expression in primary lung cancers than in normal lung tissue.

It is found in the mitochondrion inner membrane. It localises to the cytoplasm. Its subcellular location is the nucleus. The protein localises to the mitochondrion. In terms of biological role, component of the MICOS complex, a large protein complex of the mitochondrial inner membrane that plays crucial roles in the maintenance of crista junctions, inner membrane architecture, and formation of contact sites to the outer membrane. Plays an important role in the maintenance of the MICOS complex stability and the mitochondrial cristae morphology. Has also been shown to function as a transcription factor which binds to the BAG1 promoter and represses BAG1 transcription. This is MICOS complex subunit MIC19 (CHCHD3) from Homo sapiens (Human).